The chain runs to 173 residues: Small ribosomal subunit protein uS5 (173 aa).

One can recognise an S5 DRBM domain in the interval 17 to 80 (LREKMIAVNR…EEARRNMVKV (64 aa)).

This sequence belongs to the universal ribosomal protein uS5 family. In terms of assembly, part of the 30S ribosomal subunit. Contacts proteins S4 and S8.

Its function is as follows. With S4 and S12 plays an important role in translational accuracy. In terms of biological role, located at the back of the 30S subunit body where it stabilizes the conformation of the head with respect to the body. The sequence is that of Small ribosomal subunit protein uS5 from Acidovorax sp. (strain JS42).